We begin with the raw amino-acid sequence, 556 residues long: 2-succinyl-5-enolpyruvyl-6-hydroxy-3-cyclohexene-1-carboxylate synthase (556 aa).

Belongs to the TPP enzyme family. MenD subfamily. As to quaternary structure, homodimer. Mg(2+) is required as a cofactor. It depends on Mn(2+) as a cofactor. The cofactor is thiamine diphosphate.

It catalyses the reaction isochorismate + 2-oxoglutarate + H(+) = 5-enolpyruvoyl-6-hydroxy-2-succinyl-cyclohex-3-ene-1-carboxylate + CO2. Its pathway is quinol/quinone metabolism; 1,4-dihydroxy-2-naphthoate biosynthesis; 1,4-dihydroxy-2-naphthoate from chorismate: step 2/7. The protein operates within quinol/quinone metabolism; menaquinone biosynthesis. Catalyzes the thiamine diphosphate-dependent decarboxylation of 2-oxoglutarate and the subsequent addition of the resulting succinic semialdehyde-thiamine pyrophosphate anion to isochorismate to yield 2-succinyl-5-enolpyruvyl-6-hydroxy-3-cyclohexene-1-carboxylate (SEPHCHC). The polypeptide is 2-succinyl-5-enolpyruvyl-6-hydroxy-3-cyclohexene-1-carboxylate synthase (Klebsiella pneumoniae (strain 342)).